The following is a 195-amino-acid chain: Protein GrpE (195 aa).

A compositionally biased stretch (polar residues) spans M1–Q24. Residues M1–E40 are disordered.

It belongs to the GrpE family. Homodimer.

The protein localises to the cytoplasm. In terms of biological role, participates actively in the response to hyperosmotic and heat shock by preventing the aggregation of stress-denatured proteins, in association with DnaK and GrpE. It is the nucleotide exchange factor for DnaK and may function as a thermosensor. Unfolded proteins bind initially to DnaJ; upon interaction with the DnaJ-bound protein, DnaK hydrolyzes its bound ATP, resulting in the formation of a stable complex. GrpE releases ADP from DnaK; ATP binding to DnaK triggers the release of the substrate protein, thus completing the reaction cycle. Several rounds of ATP-dependent interactions between DnaJ, DnaK and GrpE are required for fully efficient folding. This Sodalis glossinidius (strain morsitans) protein is Protein GrpE.